The following is a 118-amino-acid chain: Holo-[acyl-carrier-protein] synthase (118 aa).

Mg(2+)-binding residues include D5 and E50.

The protein belongs to the P-Pant transferase superfamily. AcpS family. The cofactor is Mg(2+).

It localises to the cytoplasm. The catalysed reaction is apo-[ACP] + CoA = holo-[ACP] + adenosine 3',5'-bisphosphate + H(+). In terms of biological role, transfers the 4'-phosphopantetheine moiety from coenzyme A to a Ser of acyl-carrier-protein. The polypeptide is Holo-[acyl-carrier-protein] synthase (Aliarcobacter butzleri (strain RM4018) (Arcobacter butzleri)).